A 76-amino-acid polypeptide reads, in one-letter code: Small ribosomal subunit protein bS18 (76 aa).

The protein belongs to the bacterial ribosomal protein bS18 family. Part of the 30S ribosomal subunit. Forms a tight heterodimer with protein bS6.

In terms of biological role, binds as a heterodimer with protein bS6 to the central domain of the 16S rRNA, where it helps stabilize the platform of the 30S subunit. The protein is Small ribosomal subunit protein bS18 of Symbiobacterium thermophilum (strain DSM 24528 / JCM 14929 / IAM 14863 / T).